The chain runs to 424 residues: Transcription regulator spe-44 (424 aa).

An SAND domain is found at 65-150 (PLQITIPEGD…RTHMEAMTID (86 aa)). Disordered regions lie at residues 178-228 (ARKS…KPRQ) and 371-394 (EHSV…AREF). Residues 192 to 210 (YEIENEMAGKEADNDDNRK) show a composition bias toward basic and acidic residues. The segment covering 378 to 388 (PRTSSSSQESL) has biased composition (polar residues).

It localises to the chromosome. The protein localises to the nucleus. In terms of biological role, transcription factor which controls spermatogenesis and sperm cell fate by regulation of sperm gene expression. The sequence is that of Transcription regulator spe-44 from Caenorhabditis elegans.